A 60-amino-acid polypeptide reads, in one-letter code: Mastoparan-VT4 (60 aa).

An N-terminal signal peptide occupies residues 1–27; the sequence is MKNPILILFTAFIALLGFFGMSAEALA. 4 AXPX repeats span residues 27–30, 31–34, 35–38, and 41–44; these read ADPK, ADPL, AGPN, and ADPE. Residues 28–45 constitute a propeptide that is removed on maturation; it reads DPKADPLAGPNPDADPEA. Leucine 59 carries the post-translational modification Leucine amide.

This sequence belongs to the MCD family. Mastoparan subfamily. In terms of tissue distribution, expressed by the venom gland.

The protein resides in the secreted. Functionally, the synthetic peptide shows antimicrobial activities against Gram-negative bacteria (but not against all strains tested), Gram-positive bacteria (not all strains tested) and the fungi C.albicans and C.parapsilosis. Exhibits little hemolytic activity against washed human erythrocytes. This Vespa tropica (Greater banded hornet) protein is Mastoparan-VT4.